Here is a 242-residue protein sequence, read N- to C-terminus: Ribonuclease 3 (242 aa).

The region spanning 7 to 136 is the RNase III domain; the sequence is LEALQNLLGY…LLASIYLDGG (130 aa). Mg(2+) is bound at residue Glu-49. Asp-53 is a catalytic residue. Residues Asp-122 and Glu-125 each coordinate Mg(2+). Glu-125 is an active-site residue. Positions 167 to 236 constitute a DRBM domain; it reads DYKTQLQELT…AEKALQIIAA (70 aa).

Belongs to the ribonuclease III family. As to quaternary structure, homodimer. Mg(2+) serves as cofactor.

Its subcellular location is the cytoplasm. It catalyses the reaction Endonucleolytic cleavage to 5'-phosphomonoester.. Functionally, digests double-stranded RNA. Involved in the processing of primary rRNA transcript to yield the immediate precursors to the large and small rRNAs (23S and 16S). Processes some mRNAs, and tRNAs when they are encoded in the rRNA operon. Processes pre-crRNA and tracrRNA of type II CRISPR loci if present in the organism. The sequence is that of Ribonuclease 3 from Syntrophobacter fumaroxidans (strain DSM 10017 / MPOB).